The following is a 42-amino-acid chain: Bacteriocin bavaricin-MN (42 aa).

Cysteines 10 and 15 form a disulfide.

It belongs to the bacteriocin class IIA/YGNGV family.

The protein resides in the secreted. Has antimicrobial activity. This Latilactobacillus sakei (Lactobacillus sakei) protein is Bacteriocin bavaricin-MN.